Here is a 300-residue protein sequence, read N- to C-terminus: MAETPRLLFVHAHPDDESLGTGATIAHYTAAGADVRVVTCTLGEEGEVIGERWAELAVDRADQLGGYRIGELTAALRELGVGEPCYLGGAGRWRDSGMPGTPKRRRQRFIDADEREAVGALVAVIREQRPHVVVGYDPAGGYGHPDHVHVHTVTTAAVAAAGAGDFPGEPWAVPKFYWSVFATRPFEAAVQALTPEDLRPDWSMPSAEQFTFGYADDHIDAVVAAGPHAWAAKRAALAAHATQVVVGPTGRACALSNNVALPILDEEHYVLVAGAAGARDERGWETDLLAGLEFGAAPRR.

Positions 13, 16, and 147 each coordinate Zn(2+).

The protein belongs to the MshB deacetylase family. Zn(2+) serves as cofactor.

The enzyme catalyses 1D-myo-inositol 2-acetamido-2-deoxy-alpha-D-glucopyranoside + H2O = 1D-myo-inositol 2-amino-2-deoxy-alpha-D-glucopyranoside + acetate. Functionally, catalyzes the deacetylation of 1D-myo-inositol 2-acetamido-2-deoxy-alpha-D-glucopyranoside (GlcNAc-Ins) in the mycothiol biosynthesis pathway. In Mycobacterium avium (strain 104), this protein is 1D-myo-inositol 2-acetamido-2-deoxy-alpha-D-glucopyranoside deacetylase.